The sequence spans 250 residues: Putative apoptosis inhibitor ORF99 (250 aa).

The BIR repeat unit spans residues 13-78 (RVNSFGGWSK…KFSGDCLYLK (66 aa)).

May act as an apoptosis inhibitor. This is Putative apoptosis inhibitor ORF99 from Ostreid herpesvirus 1 (isolate France) (OsHV-1).